Reading from the N-terminus, the 3625-residue chain is MTKDDKTLDYLKRLTAELVQTRERLRTAQAASREPVAVVSMACRFPGGVSSPEELWRLVAAGRDGITPIPAGRGWDTEGLYDPDPDRVGKSYAREGGFLDDIASFDAGLFGISPREALVMDPQQRLLLEVSRETLERAGIAPGTLGGSRTGVFTGLMGGDYTARLPGILGEFEGQLEIGRAGSVASGRVAYTFGLEGPALTLDTACSSSLVALHLAVRALRDGECDLALAGGATLMSSPAALLEFSRQRALSPDGRCKAFAGQADGTGLAEGVGVVLLERLTDARRNGHPVLAVVRGSAVNQDGASNGLTAPNGPAQQRVIRAALANAGLTAAEVDAVEAHGTGTTLGDPIEAQALLATYGRRRDPQQPLWLGSLKSNIGHTQAAAGIAGVIKTVMALGAGQLPPTLHIDHPTPHVDWSEGTVRLLTEARPWPDTGRPRRVGVSSFGISGTNAHVILEQAEQPPAEDNPSRPLSPVPWVLSAQTPRALRAQAARLRDHLADAPVPHPADIAYSLAVTRDALRHRAVVVGRDPGELLRGVSALADGEPAPGLVEGEAREVGRTVLVFPGQGSQWAGMAQPLWRHSTVFRERMEACAEALAPHVDWSLREMVDAPAEDARWDRVDVVQPVLWAVMVSLAGLWRSHGVEPAAVVGHSQGEIAAACVAGALSLEDGARVVALRSRLVAERLAGKGGMVSVAAPVAEAEDRLARRPGRLALAAVNGPSSVVVSGDPAALEELLADCARDGIRARRVAVDYASHSPQVAALREELLAALAPIRPRAGEIPLYSTVTGGPLAGERLTGEHWYRNLRQTVRLAGTVRTLAAAGHSVFVECSPHPVLTPGLTETLTGLDEDALVVGTLRRDDGGPERFLCSLGELFAGGRAPDWERVFTGTGARRVALPTYAFERRRHWLDAVRPQGDPVPAGLSPLDHPWWGAVTELPEDEGWLLTGRLSRESSPWLGEHTVDGNVLLPGTAFLELALQAAEEAGCAGVAELTLQAPLLLPARGGIRLCAVVGAAGADGTHPLTLHARPEDAPDAPWTRQATGTLTRTARPAEPMPEDWPPPGADPLPVDRIYGELAALSLEYGPAFRGLRAAWRRGEELFAEVALDESGESQGFALHPALLDAALHPVAADEDADGPRLPFSWTGVTLHAVGANRLRVRIGPAGPDAVTLEAADGTGAPVAFVESLAVRPLTPGSGAPAAVTPADSLFAVDWTPAPAAPSATSRTWAVLDGAESLAPAIEAAGCEVLRRPDLTAAIAAPGLPDAMPAARDLGLGERSDAAPGLPDAMLAARDAAPGELSAAVPEPPDVVLAALDPGRGELPAAAREVTGRALALAQRWLAEDGPSRLVLLTRGAVAATGTETADPALAAAWGLLRSAQSEHPDRLVLVDWDGQPSSAAALPAAVSGDEPQLALRGGRILAPRLRRLPVTRPAPQAFDAEGTVLVTGAAGVLGRVITRHLVRTHGVRRLLLVSRRGPEAPGAAELTAELGELGASVRWTACDVADRAALADVLARIPARHPLRAVVHAGGLLDDGVVSALAPDRLETVFRPKIDAVVNLHELTSDLTAFVLFSSAAGTFGTAGQGGYAAANAFLDAFAGLRRSQGLPALSLAWGLWAETSALTARMSDTDRDRMHRSGVTGLSGAEGTALFDAALAAGPPMVLPTRLDLAAVRARAAAEGVPALLRALVKPPARRAGTATESGSALARELAALAPQDRAGAVLETVRAQAAAVLGHTGTAEVEPQRAFKELGFDSLTGVELRNRLARVTGLRLPATLVFDHPTPHSLAAHLLGRLTGGQRPRSTAPHAPARPDEPIAIIGMACRFPGGIASPEDLWRLLERGGDAISAFPADRGWDLDPAEYTAEGGFLREAARFDPEFFGISPREAVAMDPQQRLLLEITWEALERAGLDPTALRGSRTGVFAGLMYHDYTVRHAAAPGEAAGYLGTGGSGSVASGRIAYTFGFEGPAVTVDTACSSSLVALHLAAQSVRAGDCELALAGGVTVMCTPSAFTEFSRQGALAADARCKPFAAAADGTVWGEGAGVLLVERLSEAQRQGHRVLAVLRGSAVNQDGASNGLTAPNGPSQERVIRHALATARLRARDVDAVEAHGTGTTLGDPIEAQALLATYGQDRPAGRPLWLGSVKSNLGHPQAAAGVAGVIKVVLALRQGVLPRTLHVDRPTPQVDWSQGAVELLTEARPWPETGRPRRAAVSSFGISGTNAHVVLEQAPAPAEHDPQPAAVPGPLPLVLSARGEPALRAQAAGLRERLTADPGLQLADVAGSLLTTRAALEHRAVVLGDGRAELLAGLAALAHGRETPAVVRGTACAPGKTVFVFPGQGAQWPGMAAELWESSPVFRKRLGECAEALAPWVDFDAVEVVRGTATGIDPERVDVVQPALWAVMVALAGLWRSYGVEPAAVVGHSQGEIAAACVAGGLTLADGARVVALRSRALTALAGRGGMLSLALTPAEAGKLVAGRGDDRLSLAAVNGPESVVVSGDTDALEEVLAHCERTGVWARRIPVDYASHSPQVAEVRAHIQRDLAELRPRTGQVAFFSTVTGRFEDTAGLDGDYWYRNLREPVRFEPAVRELAGLGFGAFVETSPHPVLTTAVGEALAGRPGPPPVVVGSLRRGQGGPLRFLASVAEAHTRGIAVDWSTLWAGRTPRVVDLPTYPFQRRRFWLPAPAASGEVTAAGLGRAEHPLLGARMELADPPETVLTARWSLDTHPWIADHTVADTVIVPGTAFLELALLAGAETGCPQVRELIQQAPLVLAERGAARLQMRIAPPAEDGTRALAIHSRPEDASPEEPWLCHARGLLSEEEPATPPALDGSWPPPGAEPIELVGFYQHLDEIGLGYGPAFRGLRAAWRLGEEILAEAALPEPQQDETAGYRAHPALLDAALHSCLLRGRGERPEAAAMPFAWNDVACHADCGPAVRVRVTPGAGQEVSVVVADVQGSPAVTIRSLAARPVPAGQLRAAGGRSGSLFHLTWTPAPTDTGASPGAWAVLGEDDPGLALPYFPGLPALWAAYDGGATAPELVLAPLAGGPGDGPERSRELTCRALELLQSWLADDRTETRRLVIVTRGAVTASDDDPPPDPAAAAVWGLVRSAQSEHPGRFLLADLDRHPDSAPALTAALATALALDEPQLALRAGRVLLPRIQRAPAAQEGTPPWDPQGTVLITGASGTLGRAVARHLVTTHGVRRLLLVGRHGGAGEEAARLTTELAGHQATVDWAACDAADREAIAAVLASIPAAHPLTAVIHAAGVLDDGVLPALSPQRIDAVFRPKADAARHLDALTRTASPPALVVFSSAAATLGSAGQANYAAANAFLDALILARRRAGFPGQSLAWGLWSETSEMTAALGQAGRARLARSGLQGMPTEEALALLDTALATDRPLLLPMRLDPPALREGAGPLPPVLRGLVRAPARRGGPGRAEDAAALRRRLAALTPAERDRQLTDLVRAQAATVLGHPGAEAVGRDRAFKELGFDSLTAVELRNRLSTATGLRLPPTLVFDHPTPAALAGHLSTRLAPDDDPPDAPHDSEREVRRALAAIPLTRLRDAGLLDALLELAGRPAAGAAPPDDGEPGSIDRLDAEGLLAMALNNQAHAETEDHDAGW.

The region spanning 33–459 is the Ketosynthase family 3 (KS3) 1 domain; sequence REPVAVVSMA…GTNAHVILEQ (427 aa). Catalysis depends on for beta-ketoacyl synthase 1 activity residues Cys-206, His-341, and His-381. Residues 564 to 881 form the Malonyl-CoA:ACP transacylase (MAT) 1 domain; sequence LVFPGQGSQW…SLGELFAGGR (318 aa). The N-terminal hotdog fold 1 stretch occupies residues 930–1054; it reads HPWWGAVTEL…GTLTRTARPA (125 aa). In terms of domain architecture, PKS/mFAS DH 1 spans 930–1200; it reads HPWWGAVTEL…VRPLTPGSGA (271 aa). The active-site Proton acceptor; for dehydratase activity 1 is His-962. Residues 1066–1200 form a C-terminal hotdog fold 1 region; sequence ADPLPVDRIY…VRPLTPGSGA (135 aa). Residue Asp-1125 is the Proton donor; for dehydratase activity 1 of the active site. The region spanning 1443 to 1620 is the Ketoreductase (KR) 1 domain; sequence GTVLVTGAAG…LSLAWGLWAE (178 aa). Residues 1722–1797 enclose the Carrier 1 domain; it reads GAVLETVRAQ…SLAAHLLGRL (76 aa). The residue at position 1757 (Ser-1757) is an O-(pantetheine 4'-phosphoryl)serine. The 417-residue stretch at 1815 to 2231 folds into the Ketosynthase family 3 (KS3) 2 domain; the sequence is DEPIAIIGMA…GTNAHVVLEQ (417 aa). Catalysis depends on for beta-ketoacyl synthase 2 activity residues Cys-1978, His-2113, and His-2153. Residues 2336-2656 form the Malonyl-CoA:ACP transacylase (MAT) 2 domain; the sequence is VFVFPGQGAQ…VAEAHTRGIA (321 aa). Positions 2704–2829 are N-terminal hotdog fold 2; the sequence is HPLLGARMEL…GLLSEEEPAT (126 aa). Residues 2704-2981 form the PKS/mFAS DH 2 domain; the sequence is HPLLGARMEL…ARPVPAGQLR (278 aa). Residue His-2736 is the Proton acceptor; for dehydratase activity 2 of the active site. Positions 2842–2981 are C-terminal hotdog fold 2; sequence AEPIELVGFY…ARPVPAGQLR (140 aa). Asp-2903 (proton donor; for dehydratase activity 2) is an active-site residue. Positions 3182–3361 constitute a Ketoreductase (KR) 2 domain; it reads GTVLITGASG…QSLAWGLWSE (180 aa). The region spanning 3462–3537 is the Carrier 2 domain; it reads RQLTDLVRAQ…ALAGHLSTRL (76 aa). Ser-3497 carries the O-(pantetheine 4'-phosphoryl)serine modification.

In terms of assembly, the spectinabilin polyketide synthase complex is composed of 4 proteins, NorA, NorA', NorB and NorC. The complex comprises 6 modules with a total of 28 catalytic domains catalyzing 7 chain elongations. NorA comprises one module, NorA' two modules, NorB one module and NorC two modules. Pantetheine 4'-phosphate is required as a cofactor.

It catalyses the reaction 4-nitrobenzoyl-CoA + 6 (S)-methylmalonyl-CoA + malonyl-CoA + 6 NADPH + 12 H(+) = demethyldeoxyspectinabilin + 7 CO2 + 6 NADP(+) + 8 CoA + 5 H2O. It participates in antibiotic biosynthesis. It functions in the pathway polyketide biosynthesis. In terms of biological role, component of a type I modular polyketide synthase (PKS) that generates the backbone of the antibiotic spectinabilin (also known as neoaureothin), a nitroaryl-substituted polyketide metabolite. This PKS system accepts the unusual starter unit 4-nitrobenzoyl-CoA and extends it by 6 molecules of (S)-methylmalonyl-CoA and a single molecule of malonyl-CoA. This chain is Spectinabilin polyketide synthase system protein NorA', found in Streptomyces orinoci (Streptoverticillium orinoci).